The primary structure comprises 28 residues: Mast cell degranulating peptide (28 aa).

2 disulfides stabilise this stretch: Cys2–Cys18 and Cys4–Cys22.

As to expression, expressed by the venom gland.

It is found in the secreted. Functionally, mast cell degranulating peptide. This chain is Mast cell degranulating peptide, found in Bombus pensylvanicus (American bumblebee).